A 338-amino-acid chain; its full sequence is Heat-inducible transcription repressor HrcA (338 aa).

It belongs to the HrcA family.

Functionally, negative regulator of class I heat shock genes (grpE-dnaK-dnaJ and groELS operons). Prevents heat-shock induction of these operons. The sequence is that of Heat-inducible transcription repressor HrcA from Bacillus cereus (strain ATCC 10987 / NRS 248).